The sequence spans 173 residues: T-complex protein 1 subunit alpha (173 aa).

The protein belongs to the TCP-1 chaperonin family. In terms of assembly, component of the chaperonin-containing T-complex (TRiC), a heterooligomeric complex of about 850 to 900 kDa that forms two stacked rings, 12 to 16 nm in diameter.

It localises to the cytoplasm. The protein localises to the cytosol. Component of the chaperonin-containing T-complex (TRiC), a molecular chaperone complex that assists the folding of proteins upon ATP hydrolysis. This is T-complex protein 1 subunit alpha from Ambystoma mexicanum (Axolotl).